Reading from the N-terminus, the 334-residue chain is Transcription initiation factor IIB (334 aa).

The TFIIB-type zinc finger occupies 34 to 65 (TESVCPECKSRQLVHDYERAELVCQNCGLVID). Zn(2+)-binding residues include C38, C41, C57, and C60. 2 tandem repeats follow at residues 151–234 (SELD…SREL) and 245–326 (DYVP…ELAE).

This sequence belongs to the TFIIB family.

Functionally, stabilizes TBP binding to an archaeal box-A promoter. Also responsible for recruiting RNA polymerase II to the pre-initiation complex (DNA-TBP-TFIIB). In Methanosphaerula palustris (strain ATCC BAA-1556 / DSM 19958 / E1-9c), this protein is Transcription initiation factor IIB.